The following is a 105-amino-acid chain: Large ribosomal subunit protein eL36 (105 aa).

Residues M1–S36 form a disordered region. Residues R27–S36 show a composition bias toward basic residues.

The protein belongs to the eukaryotic ribosomal protein eL36 family. Component of the large ribosomal subunit (LSU).

Its subcellular location is the cytoplasm. In terms of biological role, component of the ribosome, a large ribonucleoprotein complex responsible for the synthesis of proteins in the cell. The small ribosomal subunit (SSU) binds messenger RNAs (mRNAs) and translates the encoded message by selecting cognate aminoacyl-transfer RNA (tRNA) molecules. The large subunit (LSU) contains the ribosomal catalytic site termed the peptidyl transferase center (PTC), which catalyzes the formation of peptide bonds, thereby polymerizing the amino acids delivered by tRNAs into a polypeptide chain. The nascent polypeptides leave the ribosome through a tunnel in the LSU and interact with protein factors that function in enzymatic processing, targeting, and the membrane insertion of nascent chains at the exit of the ribosomal tunnel. The chain is Large ribosomal subunit protein eL36 from Emericella nidulans (strain FGSC A4 / ATCC 38163 / CBS 112.46 / NRRL 194 / M139) (Aspergillus nidulans).